Here is a 110-residue protein sequence, read N- to C-terminus: MVVRSILLFIVAAVAEIGGAWLVWQGVREQRGLAWIGAGVIALGLYGFVATLQPDAHFGRILAAYGGIFVAGSLLWGMAFDGFRPDRADIVGALVCLAGVGVIMYAPRAH.

4 helical membrane passes run 6 to 26, 32 to 52, 61 to 81, and 90 to 110; these read ILLFIVAAVAEIGGAWLVWQG, GLAWIGAGVIALGLYGFVATL, ILAAYGGIFVAGSLLWGMAFD, and IVGALVCLAGVGVIMYAPRAH.

This sequence belongs to the UPF0060 family.

The protein localises to the cell membrane. The protein is UPF0060 membrane protein MMAR_2961 of Mycobacterium marinum (strain ATCC BAA-535 / M).